Consider the following 70-residue polypeptide: Large ribosomal subunit protein bL31 (70 aa).

Zn(2+)-binding residues include Cys-16, Cys-18, Cys-37, and Cys-40.

This sequence belongs to the bacterial ribosomal protein bL31 family. Type A subfamily. Part of the 50S ribosomal subunit. Requires Zn(2+) as cofactor.

Its function is as follows. Binds the 23S rRNA. In Haemophilus influenzae (strain 86-028NP), this protein is Large ribosomal subunit protein bL31.